The following is a 270-amino-acid chain: Formamidopyrimidine-DNA glycosylase (270 aa).

Proline 2 (schiff-base intermediate with DNA) is an active-site residue. Glutamate 3 (proton donor) is an active-site residue. The active-site Proton donor; for beta-elimination activity is the lysine 58. DNA is bound by residues histidine 91, arginine 110, and arginine 151. The segment at 236–270 (FVYGRGGQPCKVCGTELREVKLGQRASVYCPRCQR) adopts an FPG-type zinc-finger fold. Arginine 260 acts as the Proton donor; for delta-elimination activity in catalysis.

It belongs to the FPG family. Monomer. Requires Zn(2+) as cofactor.

The enzyme catalyses Hydrolysis of DNA containing ring-opened 7-methylguanine residues, releasing 2,6-diamino-4-hydroxy-5-(N-methyl)formamidopyrimidine.. It catalyses the reaction 2'-deoxyribonucleotide-(2'-deoxyribose 5'-phosphate)-2'-deoxyribonucleotide-DNA = a 3'-end 2'-deoxyribonucleotide-(2,3-dehydro-2,3-deoxyribose 5'-phosphate)-DNA + a 5'-end 5'-phospho-2'-deoxyribonucleoside-DNA + H(+). Its function is as follows. Involved in base excision repair of DNA damaged by oxidation or by mutagenic agents. Acts as a DNA glycosylase that recognizes and removes damaged bases. Has a preference for oxidized purines, such as 7,8-dihydro-8-oxoguanine (8-oxoG). Has AP (apurinic/apyrimidinic) lyase activity and introduces nicks in the DNA strand. Cleaves the DNA backbone by beta-delta elimination to generate a single-strand break at the site of the removed base with both 3'- and 5'-phosphates. The sequence is that of Formamidopyrimidine-DNA glycosylase from Pseudomonas putida (strain ATCC 700007 / DSM 6899 / JCM 31910 / BCRC 17059 / LMG 24140 / F1).